Reading from the N-terminus, the 140-residue chain is Endoribonuclease YbeY (140 aa).

The Zn(2+) site is built by H101, H105, and H111.

Belongs to the endoribonuclease YbeY family. The cofactor is Zn(2+).

The protein localises to the cytoplasm. In terms of biological role, single strand-specific metallo-endoribonuclease involved in late-stage 70S ribosome quality control and in maturation of the 3' terminus of the 16S rRNA. The chain is Endoribonuclease YbeY from Aliarcobacter butzleri (strain RM4018) (Arcobacter butzleri).